The following is a 458-amino-acid chain: Retinoic acid receptor alpha (458 aa).

Residues 1-86 (MASNGGSCPS…PPPLPRIYKP (86 aa)) are modulating. Over residues 54–68 (TPSPATIETQSTSSE) the composition is skewed to polar residues. The disordered stretch occupies residues 54–76 (TPSPATIETQSTSSEEIVPSPPS). 2 NR C4-type zinc fingers span residues 87–107 (CFVC…CEGC) and 123–147 (CHRD…LQKC). Positions 87–152 (CFVCQDKSSG…RLQKCFEVGM (66 aa)) form a DNA-binding region, nuclear receptor. The hinge stretch occupies residues 153–182 (SKESVRNDRNKKKKQEAPKQECTESYIITP). One can recognise an NR LBD domain in the interval 183 to 417 (EVEDLVEKVR…PLIQEMLENS (235 aa)). The 9aaTAD signature appears at 408-416 (PLIQEMLEN). The tract at residues 417–458 (SEGLDSLTGQPPRASSLAPPPGSCSPSLSPSSNRSSPTSHSP) is disordered. Low complexity predominate over residues 440–458 (CSPSLSPSSNRSSPTSHSP).

This sequence belongs to the nuclear hormone receptor family. NR1 subfamily. As to quaternary structure, heterodimer; with an rxr molecule. Binds DNA preferentially as a rar/rxr heterodimer. As to expression, expressed in forelimb, in the distal forelimb blastema, kidney, liver and hindlimb blastemal mesenchymal cells.

Its subcellular location is the nucleus. Receptor for retinoic acid. Retinoic acid receptors bind as heterodimers to their target response elements in response to their ligands, all-trans or 9-cis retinoic acid, and regulate gene expression in various biological processes. The rar/rxr heterodimers bind to the retinoic acid response elements (RARE) composed of tandem 5'-AGGTCA-3' sites known as DR1-DR5. Retinoic acid signaling appears to be involved in specifying proximal-distal axis in limb regeneration. The polypeptide is Retinoic acid receptor alpha (RARA) (Notophthalmus viridescens (Eastern newt)).